Reading from the N-terminus, the 84-residue chain is Putative defensin-like protein 63 (84 aa).

Residues 1-21 (MDIRKTYVIIFFVGILTISFS) form the signal peptide. 4 cysteine pairs are disulfide-bonded: Cys-40-Cys-81, Cys-44-Cys-67, Cys-53-Cys-79, and Cys-57-Cys-80.

Belongs to the DEFL family.

It localises to the secreted. The sequence is that of Putative defensin-like protein 63 from Arabidopsis thaliana (Mouse-ear cress).